A 507-amino-acid chain; its full sequence is Eukaryotic translation initiation factor 4E-binding protein Mextli homolog (507 aa).

The interval 126-163 is disordered; the sequence is RPEGQHDPAPTVGIPPSATSPPTQVTSSVTSPVPSSPQ. The segment covering 140–158 has biased composition (low complexity); the sequence is PPSATSPPTQVTSSVTSPV. One can recognise a KH domain in the interval 242–307; it reads QLRHEMIIRN…EDIERAKDMI (66 aa). Disordered regions lie at residues 314-360 and 395-424; these read NMSP…DEDI and ARPS…QQEP. A compositionally biased stretch (polar residues) spans 329-348; sequence QYSGMSSENQSIPSQQNTAN. Residues 349 to 360 show a composition bias toward acidic residues; sequence IDEDDDDDDEDI.

As to quaternary structure, interacts with eukaryotic translation initiation factor ife-3.

It localises to the cytoplasm. Plays a role in promoting translation. The sequence is that of Eukaryotic translation initiation factor 4E-binding protein Mextli homolog from Caenorhabditis elegans.